Reading from the N-terminus, the 361-residue chain is Chorismate synthase (361 aa).

NADP(+) contacts are provided by Arg-48 and Arg-54. Residues 125 to 127 (RSS), 238 to 239 (NA), Gly-278, 293 to 297 (KPTSS), and Arg-319 each bind FMN.

This sequence belongs to the chorismate synthase family. As to quaternary structure, homotetramer. Requires FMNH2 as cofactor.

It catalyses the reaction 5-O-(1-carboxyvinyl)-3-phosphoshikimate = chorismate + phosphate. It participates in metabolic intermediate biosynthesis; chorismate biosynthesis; chorismate from D-erythrose 4-phosphate and phosphoenolpyruvate: step 7/7. Functionally, catalyzes the anti-1,4-elimination of the C-3 phosphate and the C-6 proR hydrogen from 5-enolpyruvylshikimate-3-phosphate (EPSP) to yield chorismate, which is the branch point compound that serves as the starting substrate for the three terminal pathways of aromatic amino acid biosynthesis. This reaction introduces a second double bond into the aromatic ring system. The chain is Chorismate synthase from Yersinia pseudotuberculosis serotype IB (strain PB1/+).